Consider the following 456-residue polypeptide: High mobility group B protein 6 (456 aa).

Disordered stretches follow at residues 1–42 (MATN…KSAK), 117–142 (SSLT…KRPS), 238–258 (AEQD…PKHP), and 349–389 (MLKK…YFLF). Over residues 11–21 (KKPRNSRKALK) the composition is skewed to basic residues. Positions 138–206 (TKRPSSSYVL…AYLQVIAKEK (69 aa)) form a DNA-binding region, HMG box 1. Positions 240 to 254 (QDNKKKNKKEKDPLK) are enriched in basic and acidic residues. A DNA-binding region (HMG box 2) is located at residues 255 to 321 (PKHPVSAFLV…TYLQAMEEYK (67 aa)). Basic and acidic residues predominate over residues 354-363 (EKTDNLIKKE). The HMG box 3 DNA-binding region spans 379–447 (PKKPASSYFL…AYKKEVEAYN (69 aa)).

The protein resides in the nucleus. This chain is High mobility group B protein 6 (HMGB6), found in Arabidopsis thaliana (Mouse-ear cress).